The following is a 555-amino-acid chain: Pentatricopeptide repeat-containing protein At2g44880 (555 aa).

PPR repeat units lie at residues D41–A75, D77–A111, D112–R142, S143–V173, D175–K205, T206–S240, W241–T267, D273–K307, K308–S342, W343–E370, D373–A407, and K408–E438. Positions I443–N518 are type E motif. The tract at residues Y519–N549 is type E(+) motif.

This sequence belongs to the PPR family. PCMP-E subfamily.

The polypeptide is Pentatricopeptide repeat-containing protein At2g44880 (PCMP-E9) (Arabidopsis thaliana (Mouse-ear cress)).